We begin with the raw amino-acid sequence, 559 residues long: Pentatricopeptide repeat-containing protein At2g42920, chloroplastic (559 aa).

The transit peptide at 1-14 (MSPTILSFSGVTVP) directs the protein to the chloroplast. PPR repeat units follow at residues 88-122 (NPFV…SPSV), 125-159 (QRLT…GLED), 160-190 (DSFI…MIGF), 191-221 (DVVA…MPQR), 222-256 (NGVS…DVKP), 257-291 (DGFT…RFEL), 292-322 (NSIV…APKK), 323-357 (QLSC…GLEP), 358-388 (DSVS…MKEK), and 394-424 (SIKH…MPVE). A type E motif region spans residues 429–504 (IWSSLLSACR…EVGCSSIEVD (76 aa)). Residues 505 to 535 (FEVHEFISCGGTHPKSAEIYSLLDILNWDVS) form a type E(+) motif region.

This sequence belongs to the PPR family. PCMP-E subfamily.

The protein resides in the plastid. Its subcellular location is the chloroplast. This Arabidopsis thaliana (Mouse-ear cress) protein is Pentatricopeptide repeat-containing protein At2g42920, chloroplastic (PCMP-E75).